A 213-amino-acid chain; its full sequence is Glycerol-3-phosphate acyltransferase (213 aa).

5 helical membrane-spanning segments follow: residues 3-23 (ILLA…VVVS), 51-71 (KAAI…VWLA), 78-98 (DVAI…PVFF), 115-135 (AVHP…AFFF), and 140-160 (LAAL…FGMP).

This sequence belongs to the PlsY family. Probably interacts with PlsX.

It localises to the cell inner membrane. The catalysed reaction is an acyl phosphate + sn-glycerol 3-phosphate = a 1-acyl-sn-glycero-3-phosphate + phosphate. Its pathway is lipid metabolism; phospholipid metabolism. Functionally, catalyzes the transfer of an acyl group from acyl-phosphate (acyl-PO(4)) to glycerol-3-phosphate (G3P) to form lysophosphatidic acid (LPA). This enzyme utilizes acyl-phosphate as fatty acyl donor, but not acyl-CoA or acyl-ACP. The sequence is that of Glycerol-3-phosphate acyltransferase from Burkholderia cenocepacia (strain HI2424).